A 408-amino-acid chain; its full sequence is Tryptophan synthase beta chain (408 aa).

Lys90 carries the N6-(pyridoxal phosphate)lysine modification.

The protein belongs to the TrpB family. In terms of assembly, tetramer of two alpha and two beta chains. Requires pyridoxal 5'-phosphate as cofactor.

It carries out the reaction (1S,2R)-1-C-(indol-3-yl)glycerol 3-phosphate + L-serine = D-glyceraldehyde 3-phosphate + L-tryptophan + H2O. It functions in the pathway amino-acid biosynthesis; L-tryptophan biosynthesis; L-tryptophan from chorismate: step 5/5. Its function is as follows. The beta subunit is responsible for the synthesis of L-tryptophan from indole and L-serine. The sequence is that of Tryptophan synthase beta chain from Bacillus licheniformis (strain ATCC 14580 / DSM 13 / JCM 2505 / CCUG 7422 / NBRC 12200 / NCIMB 9375 / NCTC 10341 / NRRL NRS-1264 / Gibson 46).